A 353-amino-acid chain; its full sequence is UPF0283 membrane protein YcjF (353 aa).

The segment at 16–35 is disordered; that stretch reads KEESTSAFKAQQTFSEAESR. The span at 20–31 shows a compositional bias: polar residues; the sequence is TSAFKAQQTFSE. A run of 3 helical transmembrane segments spans residues 70 to 90, 100 to 120, and 213 to 233; these read MVMG…VQWT, VALG…GSVV, and ESTL…FIAW.

Belongs to the UPF0283 family.

The protein resides in the cell inner membrane. The polypeptide is UPF0283 membrane protein YcjF (Salmonella heidelberg (strain SL476)).